A 200-amino-acid chain; its full sequence is Probable nicotinate-nucleotide adenylyltransferase (200 aa).

It belongs to the NadD family.

It carries out the reaction nicotinate beta-D-ribonucleotide + ATP + H(+) = deamido-NAD(+) + diphosphate. It participates in cofactor biosynthesis; NAD(+) biosynthesis; deamido-NAD(+) from nicotinate D-ribonucleotide: step 1/1. Catalyzes the reversible adenylation of nicotinate mononucleotide (NaMN) to nicotinic acid adenine dinucleotide (NaAD). In Leifsonia xyli subsp. xyli (strain CTCB07), this protein is Probable nicotinate-nucleotide adenylyltransferase.